The sequence spans 131 residues: SKSSTETPPSYNQLNYNENLLRFFNSKPVTAPVELDPPKLESSYVSSAREDARSTLSPVHGFEGSGGSGSSGNFTTGSNVRMSSVTNTSNAGTGTSGGGNSAGGASGGVGAVGVAANAPLVTVTLTESLLN.

A disordered region spans residues Val-29–Val-109. Over residues Ser-71–Thr-93 the composition is skewed to low complexity. Positions Gly-94–Val-109 are enriched in gly residues.

As to quaternary structure, forms a heterodimer with timeless (TIM); the complex then translocates into the nucleus. In terms of processing, phosphorylated with a circadian rhythmicity, probably by the double-time protein (dbt). Phosphorylation could be implicated in the stability of per monomer and in the formation of heterodimer per-tim.

The protein localises to the nucleus. It is found in the cytoplasm. The protein resides in the perinuclear region. In terms of biological role, essential for biological clock functions. Determines the period length of circadian and ultradian rhythms; an increase in PER dosage leads to shortened circadian rhythms and a decrease leads to lengthened circadian rhythms. Essential for the circadian rhythmicity of locomotor activity, eclosion behavior, and for the rhythmic component of the male courtship song that originates in the thoracic nervous system. The biological cycle depends on the rhythmic formation and nuclear localization of the TIM-PER complex. Light induces the degradation of TIM, which promotes elimination of PER. Nuclear activity of the heterodimer coordinatively regulates PER and TIM transcription through a negative feedback loop. Behaves as a negative element in circadian transcriptional loop. Does not appear to bind DNA, suggesting indirect transcriptional inhibition. This is Period circadian protein (per) from Zaprionus tuberculatus (Vinegar fly).